The chain runs to 1027 residues: Fibril-forming collagen alpha chain (1027 aa).

Residues 1–12 (YRAGPRYIQAQV) form a nonhelical region (N-terminal) region. The disordered stretch occupies residues 1–1027 (YRAGPRYIQA…GPPGNSDYGA (1027 aa)). The triple-helical region stretch occupies residues 13–1023 (GPIGPRGPPG…PGPPGPPGNS (1011 aa)). Residues 17 to 26 (PRGPPGPPGS) are compositionally biased toward pro residues. 4-hydroxyproline; partial occurs at positions 21 and 24. Pro-27 and Pro-39 each carry 4-hydroxyproline. Pro-53 carries the 3-hydroxyproline; partial modification. Pro-54 bears the 4-hydroxyproline mark. Residues 63–72 (SGDDGRDGEP) are compositionally biased toward basic and acidic residues. Pro-72 carries the post-translational modification 4-hydroxyproline; partial. A compositionally biased stretch (gly residues) spans 73–91 (GPRGGIGPMGPRGAGGMPG). Residues Pro-90 and Pro-93 each carry the 4-hydroxyproline modification. Residues Lys-96 and Lys-108 each carry the 5-hydroxylysine modification. O-linked (Gal...) hydroxylysine glycosylation is found at Lys-96 and Lys-108. 2 positions are modified to 4-hydroxyproline; partial: Pro-123 and Pro-128. At Pro-150 the chain carries 4-hydroxyproline. Pro-161 is subject to 3-hydroxyproline; partial. Pro-162 carries the post-translational modification 4-hydroxyproline. Pro-164 carries the post-translational modification 3-hydroxyproline; partial. 4-hydroxyproline occurs at positions 165, 174, 177, and 180. A compositionally biased stretch (low complexity) spans 168 to 182 (IGSTGSPGFPGTPGS). 5-hydroxylysine occurs at positions 183 and 192. An O-linked (Gal...) hydroxylysine glycan is attached at Lys-192. A 4-hydroxyproline mark is found at Pro-207, Pro-216, Pro-219, Pro-228, and Pro-237. Residues 227–249 (EPGASGESGLPGPSGFPGPRGMP) are compositionally biased toward low complexity. Pro-243 is modified (4-hydroxyproline; partial). 4-hydroxyproline is present on residues Pro-249 and Pro-255. Residues 259-268 (GAKGDGGPTG) show a composition bias toward gly residues. Lys-261 carries the 5-hydroxylysine modification. An O-linked (Gal...) hydroxylysine glycan is attached at Lys-261. 4-hydroxyproline; partial occurs at positions 273 and 276. 5-hydroxylysine is present on Lys-279. Lys-279 carries O-linked (Gal...) hydroxylysine glycosylation. 4-hydroxyproline; partial occurs at positions 285, 291, and 303. Pro-306, Pro-312, Pro-321, Pro-327, and Pro-339 each carry 4-hydroxyproline. Position 342 is a 5-hydroxylysine (Lys-342). Residue Pro-348 is modified to 4-hydroxyproline; partial. The residue at position 351 (Lys-351) is a 5-hydroxylysine; partial. A 4-hydroxyproline mark is found at Pro-366, Pro-372, and Pro-375. Positions 380–396 (RPGKDGRPGIRGKDGKQ) are enriched in basic and acidic residues. Residue Pro-381 is modified to 4-hydroxyproline; partial. Pro-387 is modified (4-hydroxyproline). Low complexity predominate over residues 398-420 (EQGPQGPQGLAGLQGRAGPPGAR). The residue at position 416 (Pro-416) is a 3-hydroxyproline; partial. 4-hydroxyproline occurs at positions 417, 423, 429, and 432. A compositionally biased stretch (basic and acidic residues) spans 437-446 (EQGDAGKDGE). The segment covering 447 to 480 (TGAAGPPGAAGPTGARGPPGPRGQQGFQGLAGAQ) has biased composition (low complexity). 3 positions are modified to 4-hydroxyproline: Pro-453, Pro-465, and Pro-483. 4-hydroxyproline; partial occurs at positions 500, 503, and 506. Gly residues predominate over residues 502–511 (GPAGPGGERG). 4-hydroxyproline is present on residues Pro-513 and Pro-525. Residues 527 to 543 (ERGATGPAGPTGSPGVA) are compositionally biased toward low complexity. 4-hydroxyproline; partial occurs at positions 533 and 536. 4-hydroxyproline is present on Pro-540. Lys-546 carries the post-translational modification 5-hydroxylysine. Pro-551 is subject to 3-hydroxyproline; partial. A 4-hydroxyproline mark is found at Pro-552 and Pro-561. Residues Lys-567 and Lys-573 each carry the 5-hydroxylysine modification. A glycan (O-linked (Gal...) hydroxylysine) is linked at Lys-573. Residues 575–599 (SRGDIGPRGKAGERGKDGERGERGE) show a composition bias toward basic and acidic residues. 4-hydroxyproline is present on Pro-603. Lys-612 carries the 5-hydroxylysine modification. O-linked (Gal...) hydroxylysine glycosylation is present at Lys-612. Pro-621 carries the 4-hydroxyproline; partial modification. At Pro-627 the chain carries 4-hydroxyproline. Residues 635-644 (PAGSQGIQGQ) are compositionally biased toward low complexity. Pro-645 is modified (4-hydroxyproline; partial). The residue at position 647 (Pro-647) is a 3-hydroxyproline; partial. The residue at position 648 (Pro-648) is a 4-hydroxyproline. Lys-657 carries the 5-hydroxylysine modification. Lys-657 is a glycosylation site (O-linked (Gal...) hydroxylysine). 4-hydroxyproline is present on residues Pro-663, Pro-708, Pro-711, Pro-714, Pro-717, and Pro-723. A compositionally biased stretch (low complexity) spans 698–710 (ETGAQGEIGLPGS). Positions 714–726 (PGLPGPSGQPGPS) are enriched in pro residues. Position 738 is a 5-hydroxylysine (Lys-738). Lys-738 carries an O-linked (Gal...) hydroxylysine glycan. 4-hydroxyproline occurs at positions 744 and 759. The span at 750 to 771 (QGDRGSDGEPGRDGTKGERGED) shows a compositional bias: basic and acidic residues. A 5-hydroxylysine modification is found at Lys-765. Lys-765 carries O-linked (Gal...) hydroxylysine glycosylation. The residue at position 773 (Pro-773) is a 3-hydroxyproline; partial. Pro-774, Pro-783, and Pro-792 each carry 4-hydroxyproline. Residues 802 to 814 (GPMGGQGMKGDGG) are compositionally biased toward gly residues. Lys-810 is modified (5-hydroxylysine). Lys-810 is a glycosylation site (O-linked (Gal...) hydroxylysine). Pro-815 bears the 3-hydroxyproline; partial mark. 10 positions are modified to 4-hydroxyproline: Pro-816, Pro-843, Pro-849, Pro-855, Pro-861, Pro-867, Pro-888, Pro-894, Pro-903, and Pro-915. Low complexity predominate over residues 828–848 (AGPQGPTGPSGQAGAPGQEGA). Residues 884–894 (QRGLPGAAGPP) are compositionally biased toward low complexity. Low complexity predominate over residues 911–927 (PVGAPGSQGPAGIMGMK). A 5-hydroxylysine modification is found at Lys-927. Lys-927 carries O-linked (Gal...) hydroxylysine glycosylation. Lys-933 bears the 5-hydroxylysine; partial mark. 5-hydroxylysine is present on residues Lys-936 and Lys-939. Lys-936 carries an O-linked (Gal...) hydroxylysine glycan. The segment covering 942-962 (TGLPGLQGLQGTPGHSGESGP) has biased composition (low complexity). Pro-945 bears the 4-hydroxyproline mark. Pro-954 is modified (4-hydroxyproline; partial). Residues Pro-963 and Pro-966 each carry the 4-hydroxyproline modification. Gly residues predominate over residues 973–982 (GEAGGRGSQG). A compositionally biased stretch (low complexity) spans 983–1001 (PPGKDGQPGPSGRVGPRGP). Residues Pro-984 and Pro-990 each carry the 4-hydroxyproline modification. Pro-1010 carries the post-translational modification 3-hydroxyproline; partial. A compositionally biased stretch (pro residues) spans 1010-1020 (PPGPPGPPGPP). Pro-1011 carries the post-translational modification 4-hydroxyproline. At Pro-1013 the chain carries 3-hydroxyproline; partial. Pro-1014 is subject to 4-hydroxyproline. The residue at position 1016 (Pro-1016) is a 3-hydroxyproline; partial. A 4-hydroxyproline modification is found at Pro-1017. Pro-1019 bears the 3-hydroxyproline; partial mark. Pro-1020 carries the post-translational modification 4-hydroxyproline. Residues 1024 to 1027 (DYGA) are nonhelical region (C-terminal).

As to quaternary structure, homotetramer.

The protein localises to the secreted. The protein resides in the extracellular space. It is found in the extracellular matrix. Fibril-forming collagen. This is Fibril-forming collagen alpha chain from Riftia pachyptila (Vent tube worm).